Reading from the N-terminus, the 420-residue chain is Phosphoribosylamine--glycine ligase (420 aa).

An ATP-grasp domain is found at 108-314; that stretch reads KQFMEKYAIP…FAALIDALLH (207 aa). Position 134-195 (134-195) interacts with ATP; sequence LDERGVPIVI…EDFLAGEEFS (62 aa). Mg(2+) contacts are provided by Glu284 and Asn286.

This sequence belongs to the GARS family. Mg(2+) serves as cofactor. Requires Mn(2+) as cofactor.

The catalysed reaction is 5-phospho-beta-D-ribosylamine + glycine + ATP = N(1)-(5-phospho-beta-D-ribosyl)glycinamide + ADP + phosphate + H(+). The protein operates within purine metabolism; IMP biosynthesis via de novo pathway; N(1)-(5-phospho-D-ribosyl)glycinamide from 5-phospho-alpha-D-ribose 1-diphosphate: step 2/2. This is Phosphoribosylamine--glycine ligase from Listeria monocytogenes serotype 4b (strain F2365).